Reading from the N-terminus, the 445-residue chain is Exodeoxyribonuclease 7 large subunit (445 aa).

The protein belongs to the XseA family. Heterooligomer composed of large and small subunits.

The protein localises to the cytoplasm. It catalyses the reaction Exonucleolytic cleavage in either 5'- to 3'- or 3'- to 5'-direction to yield nucleoside 5'-phosphates.. Bidirectionally degrades single-stranded DNA into large acid-insoluble oligonucleotides, which are then degraded further into small acid-soluble oligonucleotides. This chain is Exodeoxyribonuclease 7 large subunit, found in Xanthomonas oryzae pv. oryzae (strain KACC10331 / KXO85).